A 314-amino-acid chain; its full sequence is Caspase-like protein (314 aa).

The protein belongs to the peptidase C14A family.

May be involved in viral replication. This Heliothis virescens ascovirus 3e (HvAV-3e) protein is Caspase-like protein.